The chain runs to 260 residues: 5'-nucleotidase SurE (260 aa).

Residues aspartate 19, aspartate 20, serine 51, and asparagine 104 each contribute to the a divalent metal cation site.

This sequence belongs to the SurE nucleotidase family. The cofactor is a divalent metal cation.

The protein resides in the cytoplasm. It carries out the reaction a ribonucleoside 5'-phosphate + H2O = a ribonucleoside + phosphate. Its function is as follows. Nucleotidase that shows phosphatase activity on nucleoside 5'-monophosphates. The chain is 5'-nucleotidase SurE from Paramagnetospirillum magneticum (strain ATCC 700264 / AMB-1) (Magnetospirillum magneticum).